Here is a 467-residue protein sequence, read N- to C-terminus: Gamma-aminobutyric acid receptor subunit rho-3 (467 aa).

Positions 1 to 24 are cleaved as a signal peptide; it reads MVLAFQLVSFTYIWIILKPNVCAA. At 25–266 the chain is on the extracellular side; sequence SNIKMTHQRC…LFINFVLRRH (242 aa). Positions 111 and 175 each coordinate 4-aminobutanoate. Cys-184 and Cys-198 are oxidised to a cystine. A 4-aminobutanoate-binding site is contributed by Glu-203. Asn-220 carries an N-linked (GlcNAc...) asparagine glycan. The chain crosses the membrane as a helical span at residues 267-287; that stretch reads VFFFVLQTYFPAILMVMLSWV. At 288 to 299 the chain is on the cytoplasmic side; that stretch reads SFWIDRRAVPAR. The helical transmembrane segment at 300 to 320 threads the bilayer; it reads VSLGITTVLTMSTIITAVSAS. The Extracellular segment spans residues 321–331; the sequence is MPQVSYLKAVD. A helical membrane pass occupies residues 332–352; it reads VYLWVSSLFVFLSVIEYAAVN. Residues 347–448 form an interaction with SQSTM1 region; the sequence is EYAAVNYLTT…NNHVIDTYSR (102 aa). Residues 353-446 lie on the Cytoplasmic side of the membrane; that stretch reads YLTTVEERKQ…LENNHVIDTY (94 aa). Residues 447 to 467 traverse the membrane as a helical segment; it reads SRILFPIVYILFNLFYWGVYV.

The protein belongs to the ligand-gated ion channel (TC 1.A.9) family. Gamma-aminobutyric acid receptor (TC 1.A.9.5) subfamily. GABRR3 sub-subfamily. As to quaternary structure, three rho subunits (rho-1/GBRR1, rho-2/GBRR2 and rho-3/GBRR3) coassemble either to form functional homopentamers or heteropentamers. Forms a ternary complex with SQSTM1 and PRKCZ.

It is found in the postsynaptic cell membrane. The protein localises to the cell membrane. It catalyses the reaction chloride(in) = chloride(out). Inhibited by TPMPA, a rho-specific antagonist, when forming a homopentamer. Rho subunit of the pentameric ligand-gated chloride channels responsible for mediating the effects of gamma-aminobutyric acid (GABA), the major inhibitory neurotransmitter in the brain. Rho-containing GABA-gated chloride channels are a subclass of GABA(A) receptors (GABAARs) entirely composed of rho subunits, where GABA molecules bind at the rho intersubunit interfaces. When activated by GABA, rho-GABAARs selectively allow the flow of chloride anions across the cell membrane down their electrochemical gradient. The protein is Gamma-aminobutyric acid receptor subunit rho-3 of Homo sapiens (Human).